A 100-amino-acid polypeptide reads, in one-letter code: Co-chaperonin GroES (100 aa).

It belongs to the GroES chaperonin family. In terms of assembly, heptamer of 7 subunits arranged in a ring. Interacts with the chaperonin GroEL.

It localises to the cytoplasm. Its function is as follows. Together with the chaperonin GroEL, plays an essential role in assisting protein folding. The GroEL-GroES system forms a nano-cage that allows encapsulation of the non-native substrate proteins and provides a physical environment optimized to promote and accelerate protein folding. GroES binds to the apical surface of the GroEL ring, thereby capping the opening of the GroEL channel. In Mycolicibacterium paratuberculosis (strain ATCC BAA-968 / K-10) (Mycobacterium paratuberculosis), this protein is Co-chaperonin GroES.